The sequence spans 206 residues: Large ribosomal subunit protein uL4 (206 aa).

The segment at 47 to 75 (GTQSAKTRAEVSGGGIKPWRQKGTGRARQ) is disordered.

The protein belongs to the universal ribosomal protein uL4 family. As to quaternary structure, part of the 50S ribosomal subunit.

Its function is as follows. One of the primary rRNA binding proteins, this protein initially binds near the 5'-end of the 23S rRNA. It is important during the early stages of 50S assembly. It makes multiple contacts with different domains of the 23S rRNA in the assembled 50S subunit and ribosome. Forms part of the polypeptide exit tunnel. This chain is Large ribosomal subunit protein uL4, found in Clostridium botulinum (strain 657 / Type Ba4).